A 122-amino-acid chain; its full sequence is Large ribosomal subunit protein bL12 (122 aa).

The protein belongs to the bacterial ribosomal protein bL12 family. As to quaternary structure, homodimer. Part of the ribosomal stalk of the 50S ribosomal subunit. Forms a multimeric L10(L12)X complex, where L10 forms an elongated spine to which 2 to 4 L12 dimers bind in a sequential fashion. Binds GTP-bound translation factors.

Functionally, forms part of the ribosomal stalk which helps the ribosome interact with GTP-bound translation factors. Is thus essential for accurate translation. The protein is Large ribosomal subunit protein bL12 of Histophilus somni (strain 129Pt) (Haemophilus somnus).